The primary structure comprises 323 residues: Lipoyl synthase (323 aa).

Residues C61, C66, C72, C87, C91, C94, and S300 each coordinate [4Fe-4S] cluster. Residues 73-289 (WDKKHATFMI…ETVAYSKGFL (217 aa)) enclose the Radical SAM core domain.

It belongs to the radical SAM superfamily. Lipoyl synthase family. [4Fe-4S] cluster serves as cofactor.

It is found in the cytoplasm. The catalysed reaction is [[Fe-S] cluster scaffold protein carrying a second [4Fe-4S](2+) cluster] + N(6)-octanoyl-L-lysyl-[protein] + 2 oxidized [2Fe-2S]-[ferredoxin] + 2 S-adenosyl-L-methionine + 4 H(+) = [[Fe-S] cluster scaffold protein] + N(6)-[(R)-dihydrolipoyl]-L-lysyl-[protein] + 4 Fe(3+) + 2 hydrogen sulfide + 2 5'-deoxyadenosine + 2 L-methionine + 2 reduced [2Fe-2S]-[ferredoxin]. Its pathway is protein modification; protein lipoylation via endogenous pathway; protein N(6)-(lipoyl)lysine from octanoyl-[acyl-carrier-protein]: step 2/2. Its function is as follows. Catalyzes the radical-mediated insertion of two sulfur atoms into the C-6 and C-8 positions of the octanoyl moiety bound to the lipoyl domains of lipoate-dependent enzymes, thereby converting the octanoylated domains into lipoylated derivatives. This Rhizobium etli (strain ATCC 51251 / DSM 11541 / JCM 21823 / NBRC 15573 / CFN 42) protein is Lipoyl synthase.